The following is a 212-amino-acid chain: ATP-dependent dethiobiotin synthetase BioD (212 aa).

G10–F15 serves as a coordination point for ATP. T14 is a binding site for Mg(2+). Residue K36 is part of the active site. S40 lines the substrate pocket. Residues D45, E106–G109, and N167–C168 contribute to the ATP site. 2 residues coordinate Mg(2+): D45 and E106.

This sequence belongs to the dethiobiotin synthetase family. As to quaternary structure, homodimer. Mg(2+) is required as a cofactor.

It localises to the cytoplasm. The enzyme catalyses (7R,8S)-7,8-diammoniononanoate + CO2 + ATP = (4R,5S)-dethiobiotin + ADP + phosphate + 3 H(+). It functions in the pathway cofactor biosynthesis; biotin biosynthesis; biotin from 7,8-diaminononanoate: step 1/2. Its function is as follows. Catalyzes a mechanistically unusual reaction, the ATP-dependent insertion of CO2 between the N7 and N8 nitrogen atoms of 7,8-diaminopelargonic acid (DAPA, also called 7,8-diammoniononanoate) to form a ureido ring. The protein is ATP-dependent dethiobiotin synthetase BioD of Methanococcus aeolicus (strain ATCC BAA-1280 / DSM 17508 / OCM 812 / Nankai-3).